A 147-amino-acid chain; its full sequence is MSLKIRLARGGSKKRPFYSIVVADARAPRDGRFIEKIGTYDPRLAKDSGDRVKVNAEKAAEWIKKGAQPTDRVARFLSKVEVDGKAVVAWTHGNNPKKAEPGKKAQERAKERADKAEAKAAAAAEAAAAPAEEAPAEAAPAEETSES.

The interval 89 to 147 (AWTHGNNPKKAEPGKKAQERAKERADKAEAKAAAAAEAAAAPAEEAPAEAAPAEETSES) is disordered. Residues 97 to 118 (KKAEPGKKAQERAKERADKAEA) are compositionally biased toward basic and acidic residues. Residues 119 to 147 (KAAAAAEAAAAPAEEAPAEAAPAEETSES) show a composition bias toward low complexity.

The protein belongs to the bacterial ribosomal protein bS16 family.

This chain is Small ribosomal subunit protein bS16, found in Hyphomonas neptunium (strain ATCC 15444).